A 291-amino-acid polypeptide reads, in one-letter code: ATP synthase gamma chain (291 aa).

Belongs to the ATPase gamma chain family. F-type ATPases have 2 components, CF(1) - the catalytic core - and CF(0) - the membrane proton channel. CF(1) has five subunits: alpha(3), beta(3), gamma(1), delta(1), epsilon(1). CF(0) has three main subunits: a, b and c.

The protein resides in the cell membrane. Produces ATP from ADP in the presence of a proton gradient across the membrane. The gamma chain is believed to be important in regulating ATPase activity and the flow of protons through the CF(0) complex. The sequence is that of ATP synthase gamma chain from Buchnera aphidicola subsp. Baizongia pistaciae (strain Bp).